We begin with the raw amino-acid sequence, 473 residues long: Trigger factor (473 aa).

Residues 171–256 form the PPIase FKBP-type domain; sequence GDRVTIDFVG…VTKIQAAGEA (86 aa). Positions 439–473 are disordered; it reads KEALFADEDGDDTTGGKPADKAEAKDESKTEAKAD. The segment covering 456 to 473 has biased composition (basic and acidic residues); the sequence is PADKAEAKDESKTEAKAD.

The protein belongs to the FKBP-type PPIase family. Tig subfamily.

Its subcellular location is the cytoplasm. It carries out the reaction [protein]-peptidylproline (omega=180) = [protein]-peptidylproline (omega=0). Its function is as follows. Involved in protein export. Acts as a chaperone by maintaining the newly synthesized protein in an open conformation. Functions as a peptidyl-prolyl cis-trans isomerase. This Methylobacterium radiotolerans (strain ATCC 27329 / DSM 1819 / JCM 2831 / NBRC 15690 / NCIMB 10815 / 0-1) protein is Trigger factor.